The chain runs to 141 residues: Hemoglobin subunit alpha-D (141 aa).

The 141-residue stretch at 1 to 141 (MLGAEETALV…VAAVLAEKYR (141 aa)) folds into the Globin domain. Histidine 58 and histidine 87 together coordinate heme b.

It belongs to the globin family. In terms of assembly, heterotetramer of two alpha-D chains and two beta chains. Red blood cells.

In terms of biological role, involved in oxygen transport from the lung to the various peripheral tissues. The chain is Hemoglobin subunit alpha-D (HBAD) from Phalacrocorax carbo (Great cormorant).